We begin with the raw amino-acid sequence, 100 residues long: Urease subunit gamma (100 aa).

The protein belongs to the urease gamma subunit family. As to quaternary structure, heterotrimer of UreA (gamma), UreB (beta) and UreC (alpha) subunits. Three heterotrimers associate to form the active enzyme.

The protein resides in the cytoplasm. The enzyme catalyses urea + 2 H2O + H(+) = hydrogencarbonate + 2 NH4(+). It participates in nitrogen metabolism; urea degradation; CO(2) and NH(3) from urea (urease route): step 1/1. This chain is Urease subunit gamma, found in Vibrio parahaemolyticus.